Reading from the N-terminus, the 163-residue chain is 3-isopropylmalate dehydratase small subunit (163 aa).

This sequence belongs to the LeuD family. LeuD type 2 subfamily. Heterodimer of LeuC and LeuD.

The catalysed reaction is (2R,3S)-3-isopropylmalate = (2S)-2-isopropylmalate. It participates in amino-acid biosynthesis; L-leucine biosynthesis; L-leucine from 3-methyl-2-oxobutanoate: step 2/4. Its function is as follows. Catalyzes the isomerization between 2-isopropylmalate and 3-isopropylmalate, via the formation of 2-isopropylmaleate. The chain is 3-isopropylmalate dehydratase small subunit from Endomicrobium trichonymphae.